We begin with the raw amino-acid sequence, 333 residues long: Homeobox protein HMX1 (333 aa).

3 disordered regions span residues M1–A74, G86–C109, and C139–T204. The span at D17–A30 shows a compositional bias: polar residues. Over residues T87–G105 the composition is skewed to gly residues. Over residues T144 to R158 the composition is skewed to basic and acidic residues. A compositionally biased stretch (gly residues) spans A159–S176. The span at E181–E192 shows a compositional bias: acidic residues. The segment at residues K201–L260 is a DNA-binding region (homeobox). The short motif at A261 to H271 is the HMX family specific domain 1 element.

This sequence belongs to the HMX homeobox family.

The protein resides in the nucleus. DNA-binding protein that binds to the 5'-CAAG-3' core sequence. May function as a transcriptional repressor. Seems to act as a transcriptional antagonist of NKX2-5. May play an important role in the development of craniofacial structures such as the eye and ear. The sequence is that of Homeobox protein HMX1 (HMX1) from Gallus gallus (Chicken).